Reading from the N-terminus, the 100-residue chain is Large ribosomal subunit protein uL23 (100 aa).

Belongs to the universal ribosomal protein uL23 family. In terms of assembly, part of the 50S ribosomal subunit. Contacts protein L29, and trigger factor when it is bound to the ribosome.

One of the early assembly proteins it binds 23S rRNA. One of the proteins that surrounds the polypeptide exit tunnel on the outside of the ribosome. Forms the main docking site for trigger factor binding to the ribosome. The polypeptide is Large ribosomal subunit protein uL23 (Prochlorococcus marinus (strain MIT 9515)).